Consider the following 690-residue polypeptide: Lipase 2 (690 aa).

A signal peptide spans Met1–Ala37. The propeptide occupies Ser38–Lys295. Positions Asn53–Lys71 are enriched in polar residues. The tract at residues Asn53–Lys266 is disordered. A compositionally biased stretch (basic and acidic residues) spans Gln72 to Gly81. Composition is skewed to polar residues over residues Leu93–Gln114, Ser124–Ile171, and Pro185–Ala206. Basic and acidic residues-rich tracts occupy residues Ile225–Glu237 and Lys257–Lys266. The active-site Nucleophile is Ser412. Gly579 is a Ca(2+) binding site. The active-site Charge relay system is Asp603. Asp644 contacts Ca(2+). His645 serves as the catalytic Charge relay system. Positions 647, 652, and 655 each coordinate Ca(2+).

The protein belongs to the AB hydrolase superfamily. Lipase family.

The protein resides in the secreted. It catalyses the reaction a triacylglycerol + H2O = a diacylglycerol + a fatty acid + H(+). The protein is Lipase 2 (lip2) of Staphylococcus aureus (strain MSSA476).